A 185-amino-acid polypeptide reads, in one-letter code: Ribosome-recycling factor (185 aa).

This sequence belongs to the RRF family.

It is found in the cytoplasm. Functionally, responsible for the release of ribosomes from messenger RNA at the termination of protein biosynthesis. May increase the efficiency of translation by recycling ribosomes from one round of translation to another. The sequence is that of Ribosome-recycling factor from Streptococcus pneumoniae serotype 19F (strain G54).